A 565-amino-acid chain; its full sequence is Anaphase-promoting complex subunit 7 (565 aa).

TPR repeat units follow at residues 101–134, 169–202, 203–236, 237–270, 339–372, 373–406, 407–439, 442–474, 475–508, and 509–531; these read EIEV…RQRT, LDAI…LDWL, SVWI…LRDN, VDLL…DPYL, VQAL…APCR, LDCY…LGAN, AQTL…AQRP, VKAV…NQSD, CVLH…DPND, and QKSL…TQEE. Position 229 is an N6-acetyllysine (K229). Basic and acidic residues predominate over residues 513–523; the sequence is EGMQKMEKEES. The tract at residues 513-565 is disordered; it reads EGMQKMEKEESPTDATQEEDVDDMEGSGEEGDLEGSDSEAAQWADQEQWFGMQ. The span at 528 to 549 shows a compositional bias: acidic residues; it reads TQEEDVDDMEGSGEEGDLEGSD.

Belongs to the APC7 family. In terms of assembly, V-shaped homodimer. The mammalian APC/C is composed at least of 14 distinct subunits ANAPC1, ANAPC2, CDC27/APC3, ANAPC4, ANAPC5, CDC16/APC6, ANAPC7, CDC23/APC8, ANAPC10, ANAPC11, CDC26/APC12, ANAPC13, ANAPC15 and ANAPC16 that assemble into a complex of at least 19 chains with a combined molecular mass of around 1.2 MDa; APC/C interacts with FZR1 and FBXO5.

It is found in the cytoplasm. The protein resides in the cytoskeleton. Its subcellular location is the nucleus. It localises to the spindle. The protein operates within protein modification; protein ubiquitination. Its function is as follows. Component of the anaphase promoting complex/cyclosome (APC/C), a cell cycle-regulated E3 ubiquitin ligase that controls progression through mitosis and the G1 phase of the cell cycle. The APC/C complex acts by mediating ubiquitination and subsequent degradation of target proteins: it mainly mediates the formation of 'Lys-11'-linked polyubiquitin chains and, to a lower extent, the formation of 'Lys-48'- and 'Lys-63'-linked polyubiquitin chains. The APC/C complex catalyzes assembly of branched 'Lys-11'-/'Lys-48'-linked branched ubiquitin chains on target proteins. APC7 is not required for the assembly of the APC/C complex, but has an enzyme-substrate adapter activity mediating the processive ubiquitination of specific substrates. Involved in brain development through the specific ubiquitination and clearance of MKI67 from constitutive heterochromatin after neuronal progenitors exit mitosis. This chain is Anaphase-promoting complex subunit 7 (Anapc7), found in Mus musculus (Mouse).